The following is a 334-amino-acid chain: GTP 3',8-cyclase (334 aa).

The Radical SAM core domain maps to 13-239 (RFHRKFYYLR…KVKAANDGPA (227 aa)). A GTP-binding site is contributed by Arg22. Cys29 and Cys33 together coordinate [4Fe-4S] cluster. Residue Tyr35 coordinates S-adenosyl-L-methionine. A [4Fe-4S] cluster-binding site is contributed by Cys36. Arg73 lines the GTP pocket. Gly77 serves as a coordination point for S-adenosyl-L-methionine. Residue Thr104 participates in GTP binding. An S-adenosyl-L-methionine-binding site is contributed by Ser128. Lys165 serves as a coordination point for GTP. Met199 is an S-adenosyl-L-methionine binding site. Residues Cys262 and Cys265 each contribute to the [4Fe-4S] cluster site. 267-269 (RLR) lines the GTP pocket. Position 279 (Cys279) interacts with [4Fe-4S] cluster.

This sequence belongs to the radical SAM superfamily. MoaA family. Monomer and homodimer. [4Fe-4S] cluster is required as a cofactor.

The enzyme catalyses GTP + AH2 + S-adenosyl-L-methionine = (8S)-3',8-cyclo-7,8-dihydroguanosine 5'-triphosphate + 5'-deoxyadenosine + L-methionine + A + H(+). Its pathway is cofactor biosynthesis; molybdopterin biosynthesis. Its function is as follows. Catalyzes the cyclization of GTP to (8S)-3',8-cyclo-7,8-dihydroguanosine 5'-triphosphate. In Vibrio vulnificus (strain CMCP6), this protein is GTP 3',8-cyclase.